Consider the following 253-residue polypeptide: Tryptophan synthase alpha chain (253 aa).

Residues Glu47 and Asp58 each act as proton acceptor in the active site.

It belongs to the TrpA family. In terms of assembly, tetramer of two alpha and two beta chains.

The catalysed reaction is (1S,2R)-1-C-(indol-3-yl)glycerol 3-phosphate + L-serine = D-glyceraldehyde 3-phosphate + L-tryptophan + H2O. It functions in the pathway amino-acid biosynthesis; L-tryptophan biosynthesis; L-tryptophan from chorismate: step 5/5. Functionally, the alpha subunit is responsible for the aldol cleavage of indoleglycerol phosphate to indole and glyceraldehyde 3-phosphate. The sequence is that of Tryptophan synthase alpha chain from Lactococcus lactis subsp. lactis (strain IL1403) (Streptococcus lactis).